The following is a 287-amino-acid chain: Phosphatidylserine decarboxylase proenzyme (287 aa).

Active-site charge relay system; for autoendoproteolytic cleavage activity residues include aspartate 90, histidine 147, and serine 252. Serine 252 acts as the Schiff-base intermediate with substrate; via pyruvic acid; for decarboxylase activity in catalysis. Serine 252 is modified (pyruvic acid (Ser); by autocatalysis).

It belongs to the phosphatidylserine decarboxylase family. PSD-B subfamily. Prokaryotic type I sub-subfamily. As to quaternary structure, heterodimer of a large membrane-associated beta subunit and a small pyruvoyl-containing alpha subunit. Requires pyruvate as cofactor. Is synthesized initially as an inactive proenzyme. Formation of the active enzyme involves a self-maturation process in which the active site pyruvoyl group is generated from an internal serine residue via an autocatalytic post-translational modification. Two non-identical subunits are generated from the proenzyme in this reaction, and the pyruvate is formed at the N-terminus of the alpha chain, which is derived from the carboxyl end of the proenzyme. The autoendoproteolytic cleavage occurs by a canonical serine protease mechanism, in which the side chain hydroxyl group of the serine supplies its oxygen atom to form the C-terminus of the beta chain, while the remainder of the serine residue undergoes an oxidative deamination to produce ammonia and the pyruvoyl prosthetic group on the alpha chain. During this reaction, the Ser that is part of the protease active site of the proenzyme becomes the pyruvoyl prosthetic group, which constitutes an essential element of the active site of the mature decarboxylase.

It localises to the cell membrane. The enzyme catalyses a 1,2-diacyl-sn-glycero-3-phospho-L-serine + H(+) = a 1,2-diacyl-sn-glycero-3-phosphoethanolamine + CO2. The protein operates within phospholipid metabolism; phosphatidylethanolamine biosynthesis; phosphatidylethanolamine from CDP-diacylglycerol: step 2/2. Catalyzes the formation of phosphatidylethanolamine (PtdEtn) from phosphatidylserine (PtdSer). The polypeptide is Phosphatidylserine decarboxylase proenzyme (Pseudomonas putida (strain W619)).